The chain runs to 245 residues: NAD-dependent protein deacylase (245 aa).

Residues 1-237 (MNFPYRNIVV…PKLVEELLAH (237 aa)) form the Deacetylase sirtuin-type domain. 13–32 (GAGISAESGIQTFRAQDGLW) lines the NAD(+) pocket. Positions 57 and 60 each coordinate substrate. 94–97 (QNID) contacts NAD(+). Residue histidine 112 is the Proton acceptor of the active site. The Zn(2+) site is built by cysteine 120 and cysteine 139. NAD(+) contacts are provided by residues 179–181 (GTS), 205–207 (NLE), and alanine 223.

This sequence belongs to the sirtuin family. Class III subfamily. Zn(2+) serves as cofactor.

It localises to the cytoplasm. The enzyme catalyses N(6)-acetyl-L-lysyl-[protein] + NAD(+) + H2O = 2''-O-acetyl-ADP-D-ribose + nicotinamide + L-lysyl-[protein]. It catalyses the reaction N(6)-succinyl-L-lysyl-[protein] + NAD(+) + H2O = 2''-O-succinyl-ADP-D-ribose + nicotinamide + L-lysyl-[protein]. NAD-dependent lysine deacetylase and desuccinylase that specifically removes acetyl and succinyl groups on target proteins. Modulates the activities of several proteins which are inactive in their acylated form. The polypeptide is NAD-dependent protein deacylase (Vibrio vulnificus (strain CMCP6)).